A 61-amino-acid polypeptide reads, in one-letter code: Metallothionein-2 (61 aa).

Methionine 1 carries the N-acetylmethionine modification. Residues methionine 1–cysteine 29 form a beta region. 18 residues coordinate a divalent metal cation: cysteine 5, cysteine 7, cysteine 13, cysteine 15, cysteine 19, cysteine 21, cysteine 24, cysteine 26, cysteine 29, cysteine 33, cysteine 34, cysteine 36, cysteine 37, cysteine 41, cysteine 44, cysteine 48, cysteine 50, and cysteine 57. Residues lysine 30–alanine 61 form an alpha region. Serine 58 bears the Phosphoserine mark. 2 residues coordinate a divalent metal cation: cysteine 59 and cysteine 60.

Belongs to the metallothionein superfamily. Type 1 family. Interacts with EOLA1.

Metallothioneins have a high content of cysteine residues that bind various heavy metals; these proteins are transcriptionally regulated by both heavy metals and glucocorticoids. This Ovis aries (Sheep) protein is Metallothionein-2 (MT2A).